The following is a 345-amino-acid chain: Calcium uniporter regulatory subunit MCUb, mitochondrial (345 aa).

The transit peptide at 1–44 directs the protein to the mitochondrion; the sequence is MPGALSGRRMLPSGLCLGRWQLLRTIRARGRGDPRELPSTPQVL. Positions 188–221 form a coiled coil; it reads EIQKRRERHLMAKIDHLQEQLRPLEQVKAAIEAR. A run of 2 helical transmembrane segments spans residues 229 to 249 and 259 to 279; these read LLWA…WLTW and PVTF…FIIT. The stretch at 306–334 forms a coiled coil; sequence FDVEQYNKLKEDLAEATESLESVRRSLRL.

It belongs to the MCU (TC 1.A.77) family. Homooligomer. Associates with the uniplex complex, composed of MCU, MICU1, MICU2 and EMRE/SMDT1, inhibiting its activity. Detected in lung, brain and heart, and at lower levels in white fat, skeletal muscle and spleen. Detected at very low levels in kidney and liver. Highly expressed in macrophages during the progression of skeletal muscle regeneration.

It is found in the mitochondrion inner membrane. Negative regulator of the mitochondrial calcium uniporter (MCU), a channel that mediates calcium uptake into the mitochondrial matrix. MCUB is required to limit mitochondrial calcium overload during stress. Acts as a dominant-negative regulator that displaces MCU from the functional uniplex complex and thereby decreases the association of calcium sensors MICU1 and MICU2, preventing channel gating. Mitochondrial calcium homeostasis plays key roles in mitochondrial metabolism. Acts as an important regulator of mitochondrial metabolism in response to stress in muscle cells: induced in response to fasting, leading to restrict mitochondrial calcium uptake, resulting in reprogramming of mitochondria toward fatty acid oxidation preference. Acts as a regulator of macrophage polarization during skeletal muscle regeneration: inhibition of mitochondrial calcium uptake drives differentiation of macrophages with anti-inflammatory profile, promoting the differentiation and fusion of satellite cells. This Mus musculus (Mouse) protein is Calcium uniporter regulatory subunit MCUb, mitochondrial.